The sequence spans 431 residues: Enolase (431 aa).

Position 163 (Gln163) interacts with (2R)-2-phosphoglycerate. The active-site Proton donor is Glu205. Residues Asp242, Glu288, and Asp315 each contribute to the Mg(2+) site. Lys340, Arg369, Ser370, and Lys391 together coordinate (2R)-2-phosphoglycerate. Lys340 acts as the Proton acceptor in catalysis.

This sequence belongs to the enolase family. It depends on Mg(2+) as a cofactor.

Its subcellular location is the cytoplasm. The protein localises to the secreted. The protein resides in the cell surface. It catalyses the reaction (2R)-2-phosphoglycerate = phosphoenolpyruvate + H2O. Its pathway is carbohydrate degradation; glycolysis; pyruvate from D-glyceraldehyde 3-phosphate: step 4/5. Catalyzes the reversible conversion of 2-phosphoglycerate (2-PG) into phosphoenolpyruvate (PEP). It is essential for the degradation of carbohydrates via glycolysis. This Bacillus anthracis (strain A0248) protein is Enolase.